Reading from the N-terminus, the 168-residue chain is Skp-like protein (168 aa).

An N-terminal signal peptide occupies residues M1–A22.

Belongs to the Skp family.

The chain is Skp-like protein from Pseudomonas aeruginosa (strain ATCC 15692 / DSM 22644 / CIP 104116 / JCM 14847 / LMG 12228 / 1C / PRS 101 / PAO1).